Here is a 128-residue protein sequence, read N- to C-terminus: Small ribosomal subunit protein uS8 (128 aa).

It belongs to the universal ribosomal protein uS8 family. Part of the 30S ribosomal subunit. Contacts proteins S5 and S12.

One of the primary rRNA binding proteins, it binds directly to 16S rRNA central domain where it helps coordinate assembly of the platform of the 30S subunit. The chain is Small ribosomal subunit protein uS8 from Methylacidiphilum infernorum (isolate V4) (Methylokorus infernorum (strain V4)).